Consider the following 359-residue polypeptide: Fructose-bisphosphate aldolase (359 aa).

S62 contributes to the D-glyceraldehyde 3-phosphate binding site. The active-site Proton donor is the D109. 4 residues coordinate Zn(2+): H110, D144, E174, and H226. G227 is a binding site for dihydroxyacetone phosphate. Zn(2+) is bound at residue H265. Residues 266-268 (GGS) and 287-290 (NLDT) contribute to the dihydroxyacetone phosphate site.

Belongs to the class II fructose-bisphosphate aldolase family. As to quaternary structure, homodimer. The cofactor is Zn(2+).

Its subcellular location is the cytoplasm. It carries out the reaction beta-D-fructose 1,6-bisphosphate = D-glyceraldehyde 3-phosphate + dihydroxyacetone phosphate. It participates in carbohydrate degradation; glycolysis; D-glyceraldehyde 3-phosphate and glycerone phosphate from D-glucose: step 4/4. In terms of biological role, catalyzes the aldol condensation of dihydroxyacetone phosphate (DHAP or glycerone-phosphate) with glyceraldehyde 3-phosphate (G3P) to form fructose 1,6-bisphosphate (FBP) in gluconeogenesis and the reverse reaction in glycolysis. This chain is Fructose-bisphosphate aldolase (FBA1), found in Candida albicans (strain SC5314 / ATCC MYA-2876) (Yeast).